The sequence spans 346 residues: Phenylalanine--tRNA ligase alpha subunit (346 aa).

Residue Glu-264 participates in Mg(2+) binding.

Belongs to the class-II aminoacyl-tRNA synthetase family. Phe-tRNA synthetase alpha subunit type 1 subfamily. In terms of assembly, tetramer of two alpha and two beta subunits. Requires Mg(2+) as cofactor.

The protein localises to the cytoplasm. It catalyses the reaction tRNA(Phe) + L-phenylalanine + ATP = L-phenylalanyl-tRNA(Phe) + AMP + diphosphate + H(+). This is Phenylalanine--tRNA ligase alpha subunit from Leifsonia xyli subsp. xyli (strain CTCB07).